A 160-amino-acid chain; its full sequence is Nucleotide-binding protein VV1_2655 (160 aa).

This sequence belongs to the YajQ family.

Nucleotide-binding protein. The chain is Nucleotide-binding protein VV1_2655 from Vibrio vulnificus (strain CMCP6).